The chain runs to 270 residues: Mediator of RNA polymerase II transcription subunit 4 (270 aa).

Positions 1–25 (MAAASSGEKEKERPGGGLGAAGGNS) are disordered. Ala2 carries the post-translational modification N-acetylalanine. Coiled-coil stretches lie at residues 24–48 (NSTR…IEML) and 90–131 (HHEM…AKEK). Residue Ser32 is modified to Phosphoserine. Residues 231-270 (MLPPNHSHDFLLEPPGHNKENEDDVEVMSTDSSSSSSDSD) are disordered. Over residues 236–250 (HSHDFLLEPPGHNKE) the composition is skewed to basic and acidic residues. Over residues 259 to 270 (STDSSSSSSDSD) the composition is skewed to low complexity.

It belongs to the Mediator complex subunit 4 family. Component of the Mediator complex, which is composed of MED1, MED4, MED6, MED7, MED8, MED9, MED10, MED11, MED12, MED13, MED13L, MED14, MED15, MED16, MED17, MED18, MED19, MED20, MED21, MED22, MED23, MED24, MED25, MED26, MED27, MED29, MED30, MED31, CCNC, CDK8 and CDC2L6/CDK11. The MED12, MED13, CCNC and CDK8 subunits form a distinct module termed the CDK8 module. Mediator containing the CDK8 module is less active than Mediator lacking this module in supporting transcriptional activation. Individual preparations of the Mediator complex lacking one or more distinct subunits have been variously termed ARC, CRSP, DRIP, PC2, SMCC and TRAP.

Its subcellular location is the nucleus. Functionally, component of the Mediator complex, a coactivator involved in the regulated transcription of nearly all RNA polymerase II-dependent genes. Mediator functions as a bridge to convey information from gene-specific regulatory proteins to the basal RNA polymerase II transcription machinery. Mediator is recruited to promoters by direct interactions with regulatory proteins and serves as a scaffold for the assembly of a functional preinitiation complex with RNA polymerase II and the general transcription factors. The sequence is that of Mediator of RNA polymerase II transcription subunit 4 (MED4) from Bos taurus (Bovine).